Here is a 286-residue protein sequence, read N- to C-terminus: Bifunctional protein FolD (286 aa).

Residues Gly165 to Ser167, Ser190, and Val231 contribute to the NADP(+) site.

Belongs to the tetrahydrofolate dehydrogenase/cyclohydrolase family. Homodimer.

It carries out the reaction (6R)-5,10-methylene-5,6,7,8-tetrahydrofolate + NADP(+) = (6R)-5,10-methenyltetrahydrofolate + NADPH. The catalysed reaction is (6R)-5,10-methenyltetrahydrofolate + H2O = (6R)-10-formyltetrahydrofolate + H(+). It participates in one-carbon metabolism; tetrahydrofolate interconversion. In terms of biological role, catalyzes the oxidation of 5,10-methylenetetrahydrofolate to 5,10-methenyltetrahydrofolate and then the hydrolysis of 5,10-methenyltetrahydrofolate to 10-formyltetrahydrofolate. In Bacillus mycoides (strain KBAB4) (Bacillus weihenstephanensis), this protein is Bifunctional protein FolD.